Here is a 226-residue protein sequence, read N- to C-terminus: Acyl-homoserine-lactone synthase (226 aa).

Belongs to the autoinducer synthase family.

The enzyme catalyses a fatty acyl-[ACP] + S-adenosyl-L-methionine = an N-acyl-L-homoserine lactone + S-methyl-5'-thioadenosine + holo-[ACP] + H(+). Functionally, required for the synthesis of OHHL (N-(3-oxohexanoyl)-L-homoserine lactone), an autoinducer molecule. This is Acyl-homoserine-lactone synthase (psyI) from Pseudomonas amygdali pv. tabaci (Pseudomonas syringae pv. tabaci).